Here is a 398-residue protein sequence, read N- to C-terminus: 1-aminocyclopropane-1-carboxylate oxidase homolog 5 (398 aa).

Residues 247-347 (KSHIMFGQYY…RISMPCFVST (101 aa)) enclose the Fe2OG dioxygenase domain. Positions 271, 273, and 327 each coordinate Fe cation. Position 338 (arginine 338) interacts with 2-oxoglutarate.

The protein belongs to the iron/ascorbate-dependent oxidoreductase family. Requires Fe(2+) as cofactor. In terms of tissue distribution, expressed in etiolated seedlings, leaves, stems and flowers.

This Arabidopsis thaliana (Mouse-ear cress) protein is 1-aminocyclopropane-1-carboxylate oxidase homolog 5 (2A6).